We begin with the raw amino-acid sequence, 328 residues long: MGVYLGKYCYIMIIMLVLVLGKEVRSQLLKNGYYSTSCPKAESIVRSTVESHFDSDPTISPGLLRLHFHDCFVQGCDGSVLIKGKSAEQAALPNLGLRGLEVIDDAKARLEAVCPGVVSCADILALAARDSVDLSDGPSWRVPTGRKDGRISLATEASNLPSPLDSVAVQKQKFQDKGLDTHDLVTLLGAHTIGQTDCLFFRYRLYNFTVTGNSDPTISPSFLTQLKTLCPPNGDGSKRVALDIGSPSKFDESFFKNLRDGNAILESDQRLWSDAETNAVVKKYASRLRGLLGFRFDYEFGKAMIKMSSIDVKTDVDGEVRKVCSKVN.

The signal sequence occupies residues 1–26 (MGVYLGKYCYIMIIMLVLVLGKEVRS). Cystine bridges form between Cys38-Cys114, Cys71-Cys76, Cys120-Cys324, and Cys198-Cys230. The Proton acceptor role is filled by His69. Residues Asp70, Val73, Gly75, Asp77, and Ser79 each coordinate Ca(2+). Position 161 (Pro161) interacts with substrate. His191 is a heme b binding site. Thr192 is a Ca(2+) binding site. The N-linked (GlcNAc...) asparagine glycan is linked to Asn207. Residues Asp243, Ser246, and Asp251 each contribute to the Ca(2+) site.

The protein belongs to the peroxidase family. Classical plant (class III) peroxidase subfamily. It depends on heme b as a cofactor. Ca(2+) serves as cofactor.

The protein resides in the secreted. It catalyses the reaction 2 a phenolic donor + H2O2 = 2 a phenolic radical donor + 2 H2O. Its function is as follows. Removal of H(2)O(2), oxidation of toxic reductants, biosynthesis and degradation of lignin, suberization, auxin catabolism, response to environmental stresses such as wounding, pathogen attack and oxidative stress. These functions might be dependent on each isozyme/isoform in each plant tissue. In Arabidopsis thaliana (Mouse-ear cress), this protein is Peroxidase 25 (PER25).